The sequence spans 115 residues: uncharacterized protein (115 aa).

The interval 1–115 is disordered; sequence MGETWFLTPN…ARSPERTPSP (115 aa). The segment covering 7 to 17 has biased composition (polar residues); it reads LTPNGQSSPGS. 2 stretches are compositionally biased toward low complexity: residues 60 to 70 and 91 to 107; these read ASCAPRATPRR and SASA…WPAR.

This is an uncharacterized protein from Human adenovirus C serotype 2 (HAdV-2).